A 365-amino-acid polypeptide reads, in one-letter code: MIIYATEVETINSFVRLESLKELYSLVWIFVPIFSLVLGIITGVLVIAWIERELSAGIQQRIGPEYAGPLGILQALADGTKLLFKEDLRPSRGNTPLFSIGPSIAVISILLSYSVIPFSNHLVLADLNIGIFLWIAISSIAPIGLLMSGYGSNNKYSFLGGLRAAAQSISYEIPLTLCVLSISLLSNSLSTVDIVEAQSKYGFWGWNLWRQPIGFIIFLISSLAECERLPFDLPEAEEELIAGYQTEYSGIKFGLFYVASYINLLISSLFVTILYLGGWNISIPYISIPYISILELFERDPIFGTTIGIFITLAKTYLFLFISIATRWTLPRLRMDQLLNLGWKFLLPISLGNLLLTTSFQLFSL.

Helical transmembrane passes span 27–47, 98–118, 129–149, 165–185, 203–223, 253–273, 302–322, and 345–365; these read VWIF…VLVI, FSIG…VIPF, IGIF…LMSG, AAQS…ISLL, FWGW…ISSL, FGLF…FVTI, IFGT…FLFI, and FLLP…LFSL.

It belongs to the complex I subunit 1 family. NDH is composed of at least 16 different subunits, 5 of which are encoded in the nucleus.

The protein localises to the plastid. It localises to the chloroplast thylakoid membrane. It carries out the reaction a plastoquinone + NADH + (n+1) H(+)(in) = a plastoquinol + NAD(+) + n H(+)(out). The catalysed reaction is a plastoquinone + NADPH + (n+1) H(+)(in) = a plastoquinol + NADP(+) + n H(+)(out). In terms of biological role, NDH shuttles electrons from NAD(P)H:plastoquinone, via FMN and iron-sulfur (Fe-S) centers, to quinones in the photosynthetic chain and possibly in a chloroplast respiratory chain. The immediate electron acceptor for the enzyme in this species is believed to be plastoquinone. Couples the redox reaction to proton translocation, and thus conserves the redox energy in a proton gradient. This chain is NAD(P)H-quinone oxidoreductase subunit 1, chloroplastic, found in Arabis hirsuta (Hairy rock-cress).